The sequence spans 191 residues: Putative resolvase L103 (191 aa).

Residues 11–30 (LEVLKVHYQTLYRMEEKGLI) constitute a DNA-binding region (H-T-H motif). The region spanning 59 to 191 (KGICYCRVSS…KKSGKLKAKK (133 aa)) is the Resolvase/invertase-type recombinase catalytic domain. A coiled-coil region spans residues 65-91 (RVSSKKQIKDLNRQVEYMEKNYPEYEI). Catalysis depends on Ser-67, which acts as the O-(5'-phospho-DNA)-serine intermediate.

Belongs to the site-specific recombinase resolvase family.

Its function is as follows. Resolvase catalyzes the resolution (a site-specific recombination) of the cointegrated replicon to yield the final transposition products. In Acanthamoeba polyphaga (Amoeba), this protein is Putative resolvase L103.